Consider the following 181-residue polypeptide: I-Kappa-B like protein C2 (181 aa).

ANK repeat units follow at residues 54–86, 91–121, and 125–154; these read DGKXCMHIVVSQDKVDPINKLMLLMKWGADINS, DGNTVLHIAVLTNNYEVAKWLCQQPGVDMEI, and ARKTPYQIACDRANTRMMDLLXKNGARCDV.

It belongs to the polydnaviridae I-Kappa-B-like protein family.

Functionally, suppresses the host immune response through NF-kappa-B inactivation. Possesses ankyrin repeat domains required for NF-kappa-B binding but lacks the regulatory regions required for dissociation from NF-kappa-B and degradation. Therefore, prevents host NF-kappa-B release and subsequent activation. The chain is I-Kappa-B like protein C2 (C2) from Microplitis demolitor (Parasitoid wasp).